The following is a 291-amino-acid chain: tRNA-cytidine(32) 2-sulfurtransferase (291 aa).

Residues 36-41 carry the PP-loop motif motif; it reads SGGKDS. Residues C111, C114, and C202 each coordinate [4Fe-4S] cluster. The disordered stretch occupies residues 258-291; sequence RDPWLDAEDEEAEDCGEPPAGDGVVSLGGARGGR. Acidic residues predominate over residues 262–273; that stretch reads LDAEDEEAEDCG.

This sequence belongs to the TtcA family. Homodimer. Mg(2+) is required as a cofactor. [4Fe-4S] cluster serves as cofactor.

It is found in the cytoplasm. It catalyses the reaction cytidine(32) in tRNA + S-sulfanyl-L-cysteinyl-[cysteine desulfurase] + AH2 + ATP = 2-thiocytidine(32) in tRNA + L-cysteinyl-[cysteine desulfurase] + A + AMP + diphosphate + H(+). The protein operates within tRNA modification. Catalyzes the ATP-dependent 2-thiolation of cytidine in position 32 of tRNA, to form 2-thiocytidine (s(2)C32). The sulfur atoms are provided by the cysteine/cysteine desulfurase (IscS) system. The protein is tRNA-cytidine(32) 2-sulfurtransferase of Anaeromyxobacter dehalogenans (strain 2CP-1 / ATCC BAA-258).